Consider the following 294-residue polypeptide: Protein C3orf33 homolog (294 aa).

Residue Ala2 is modified to N-acetylalanine. A helical membrane pass occupies residues 36 to 53; sequence LVQNISTGMAIAGIMLLI. The segment at 244–271 is disordered; sequence KPAGADLGSTKDSYHDSRRRASGKGKDS.

It localises to the membrane. In terms of biological role, may play a role in transcription regulation. This is Protein C3orf33 homolog from Mus musculus (Mouse).